Reading from the N-terminus, the 789-residue chain is Probable phosphoketolase (789 aa).

This sequence belongs to the XFP family. Thiamine diphosphate is required as a cofactor.

The sequence is that of Probable phosphoketolase from Brucella abortus (strain 2308).